Reading from the N-terminus, the 167-residue chain is Small ribosomal subunit protein uS5 (167 aa).

An S5 DRBM domain is found at 12-75 (LQEKLIAVNR…EKARRNMVTV (64 aa)).

It belongs to the universal ribosomal protein uS5 family. Part of the 30S ribosomal subunit. Contacts proteins S4 and S8.

Its function is as follows. With S4 and S12 plays an important role in translational accuracy. In terms of biological role, located at the back of the 30S subunit body where it stabilizes the conformation of the head with respect to the body. The sequence is that of Small ribosomal subunit protein uS5 from Shewanella denitrificans (strain OS217 / ATCC BAA-1090 / DSM 15013).